The sequence spans 644 residues: Sodium/hydrogen exchanger 9 (644 aa).

Topologically, residues 1 to 20 (MAGQLRFTSGKDEDHFQHQG) are lumenal. A helical transmembrane segment spans residues 21–41 (AVELLAFNFLLILTILTIWLF). Topologically, residues 42-45 (KNHR) are cytoplasmic. Residues 46–66 (FRFLHETGGAMVYGLIMGLIL) form a helical membrane-spanning segment. Residues 67 to 126 (RYATAPTDIDSGTVYNCGNLFFSPSTLLVNITDQVYEYKYQREINQHNISPHQGNAILEK) lie on the Lumenal side of the membrane. A helical transmembrane segment spans residues 127 to 147 (MTFDPEIFFNVLLPPIIFHAG). Topologically, residues 148–164 (YSLKKRHFFQNLGSILT) are cytoplasmic. Residues 165–185 (YAFLGTAISCVVIGLIMYGFV) traverse the membrane as a helical segment. At 186–203 (KAMVHAGQLKSGDFHFTD) the chain is on the lumenal side. Residues 204–224 (CLFFGSLMSATDPVTVLAIFH) traverse the membrane as a helical segment. Topologically, residues 225–235 (ELHVDPDLYTL) are cytoplasmic. Residues 236–256 (LFGESVLNDAVAIVLTYSISI) form a helical membrane-spanning segment. The Lumenal segment spans residues 257–277 (YSPKENPNAFDTAAFFQSVGN). A helical membrane pass occupies residues 278–298 (FLGIFAGSFAMGSAYAVVTAL). The Cytoplasmic portion of the chain corresponds to 299-309 (LTKFTKLREFP). The helical transmembrane segment at 310–327 (MLETGLFFLLSWSAFLSA) threads the bilayer. Topologically, residues 328–333 (EAAGLT) are lumenal. The chain crosses the membrane as a helical span at residues 334–350 (GIVAVLFCGVTQAHYTY). Residues 351 to 364 (NNLSSDSKLRTKQL) lie on the Cytoplasmic side of the membrane. The helical transmembrane segment at 365-385 (FEFMNFLAENVIFCYMGLALF) threads the bilayer. Position 386 (Thr386) is a topological domain, lumenal. Residues 387-407 (FQNHIFNALFILGAFLAIFVA) traverse the membrane as a helical segment. The Cytoplasmic segment spans residues 408–429 (RACNIYPLSFLLNLGRKQKIPW). Residues 430-450 (NFQHMMMFSGLRGAIAFALAI) traverse the membrane as a helical segment. The Lumenal portion of the chain corresponds to 451-465 (RNTESQPKQMMFTTT). The helical transmembrane segment at 466–486 (LLLVFFTVWVFGGGTTPMLTW) threads the bilayer. Over 487-644 (LQIRVGVDLD…EQTRGQPQMD (158 aa)) the chain is Cytoplasmic. The tract at residues 590–644 (YQEQSPSPSSPTTKLALDQKSSGQTPGKENIYEGDLGLGGYDLKLEQTRGQPQMD) is disordered.

The protein belongs to the monovalent cation:proton antiporter 1 (CPA1) transporter (TC 2.A.36) family. As to quaternary structure, homodimer; phosphatidylinositol-4,5-bisphosphate (PIP2) and phosphatidylinositol 3,4,5-trisphosphate (PIP3) could be involved in the dimer stabilization. Interacts (via the C-terminus) with RACK1. Interacts with CHP1. Expressed in the brain. Highly expressed in immune cells, specifically macrophages.

Its subcellular location is the late endosome membrane. It is found in the cell membrane. It localises to the early endosome membrane. The protein resides in the recycling endosome membrane. The protein localises to the cytoplasmic vesicle. Its subcellular location is the phagosome membrane. It carries out the reaction Na(+)(in) + H(+)(out) = Na(+)(out) + H(+)(in). The enzyme catalyses K(+)(in) + H(+)(out) = K(+)(out) + H(+)(in). Functionally, endosomal Na(+), K(+)/H(+) antiporter. Mediates the electroneutral exchange of endosomal luminal H(+) for a cytosolic Na(+) or K(+). By facilitating proton efflux, SLC9A9 counteracts the acidity generated by vacuolar (V)-ATPase, thereby limiting luminal acidification. Regulates organellar pH and consequently, endosome maturation and endocytic trafficking of plasma membrane receptors and neurotransporters. Promotes the recycling of transferrin receptors back to the cell surface to facilitate additional iron uptake in the brain. Regulates synaptic transmission by regulating the luminal pH of axonal endosomes. Regulates phagosome lumenal pH, thus affecting phagosome maturation, and consequently, microbicidal activity in macrophages. Can also be active at the cell surface of specialized cells, e.g., in the inner ear hair bundles uses the high K(+) of the endolymph to regulate intracelular pH. This is Sodium/hydrogen exchanger 9 (Slc9a9) from Mus musculus (Mouse).